The primary structure comprises 207 residues: Ribosomal RNA large subunit methyltransferase E (207 aa).

Positions 60, 62, 80, 96, and 121 each coordinate S-adenosyl-L-methionine. Lys-161 functions as the Proton acceptor in the catalytic mechanism.

It belongs to the class I-like SAM-binding methyltransferase superfamily. RNA methyltransferase RlmE family.

Its subcellular location is the cytoplasm. The enzyme catalyses uridine(2552) in 23S rRNA + S-adenosyl-L-methionine = 2'-O-methyluridine(2552) in 23S rRNA + S-adenosyl-L-homocysteine + H(+). In terms of biological role, specifically methylates the uridine in position 2552 of 23S rRNA at the 2'-O position of the ribose in the fully assembled 50S ribosomal subunit. The sequence is that of Ribosomal RNA large subunit methyltransferase E from Thioalkalivibrio sulfidiphilus (strain HL-EbGR7).